Consider the following 61-residue polypeptide: Large ribosomal subunit protein eL37 (61 aa).

Positions 18, 21, 33, and 36 each coordinate Zn(2+). The C4-type zinc finger occupies 18–36; it reads CRRCGRNAYNPTKKYCASC.

This sequence belongs to the eukaryotic ribosomal protein eL37 family. Zn(2+) is required as a cofactor.

In terms of biological role, binds to the 23S rRNA. The polypeptide is Large ribosomal subunit protein eL37 (Methanosphaera stadtmanae (strain ATCC 43021 / DSM 3091 / JCM 11832 / MCB-3)).